We begin with the raw amino-acid sequence, 176 residues long: Crossover junction endodeoxyribonuclease RuvC (176 aa).

Residues Asp-8, Glu-69, and Asp-141 contribute to the active site. Mg(2+) is bound by residues Asp-8, Glu-69, and Asp-141.

This sequence belongs to the RuvC family. As to quaternary structure, homodimer which binds Holliday junction (HJ) DNA. The HJ becomes 2-fold symmetrical on binding to RuvC with unstacked arms; it has a different conformation from HJ DNA in complex with RuvA. In the full resolvosome a probable DNA-RuvA(4)-RuvB(12)-RuvC(2) complex forms which resolves the HJ. Mg(2+) serves as cofactor.

The protein resides in the cytoplasm. It carries out the reaction Endonucleolytic cleavage at a junction such as a reciprocal single-stranded crossover between two homologous DNA duplexes (Holliday junction).. In terms of biological role, the RuvA-RuvB-RuvC complex processes Holliday junction (HJ) DNA during genetic recombination and DNA repair. Endonuclease that resolves HJ intermediates. Cleaves cruciform DNA by making single-stranded nicks across the HJ at symmetrical positions within the homologous arms, yielding a 5'-phosphate and a 3'-hydroxyl group; requires a central core of homology in the junction. The consensus cleavage sequence is 5'-(A/T)TT(C/G)-3'. Cleavage occurs on the 3'-side of the TT dinucleotide at the point of strand exchange. HJ branch migration catalyzed by RuvA-RuvB allows RuvC to scan DNA until it finds its consensus sequence, where it cleaves and resolves the cruciform DNA. The polypeptide is Crossover junction endodeoxyribonuclease RuvC (Pseudomonas syringae pv. tomato (strain ATCC BAA-871 / DC3000)).